Consider the following 356-residue polypeptide: tRNA N6-adenosine threonylcarbamoyltransferase (356 aa).

2 residues coordinate Fe cation: histidine 115 and histidine 119. Residues 138-142, aspartate 171, glycine 184, and asparagine 283 each bind substrate; that span reads LVSGG. Residue aspartate 311 participates in Fe cation binding.

Belongs to the KAE1 / TsaD family. The cofactor is Fe(2+).

It localises to the cytoplasm. The enzyme catalyses L-threonylcarbamoyladenylate + adenosine(37) in tRNA = N(6)-L-threonylcarbamoyladenosine(37) in tRNA + AMP + H(+). Functionally, required for the formation of a threonylcarbamoyl group on adenosine at position 37 (t(6)A37) in tRNAs that read codons beginning with adenine. Is involved in the transfer of the threonylcarbamoyl moiety of threonylcarbamoyl-AMP (TC-AMP) to the N6 group of A37, together with TsaE and TsaB. TsaD likely plays a direct catalytic role in this reaction. This is tRNA N6-adenosine threonylcarbamoyltransferase from Prochlorococcus marinus (strain SARG / CCMP1375 / SS120).